A 1881-amino-acid chain; its full sequence is Ankyrin-1 (1881 aa).

The tract at residues 1-827 is 89 kDa domain; that stretch reads MPYSVGFREA…EDEGEELISF (827 aa). ANK repeat units follow at residues 44–73, 77–106, 110–139, 143–172, 174–201, 205–234, 238–267, 271–300, 304–333, 337–366, 370–399, 403–432, 436–465, 469–498, 502–531, 535–564, 568–597, 601–630, 634–663, 667–696, 700–729, 733–762, and 766–795; these read NGLN…ILET, KGNT…NVNA, KGFT…NQNV, DGFT…KGKV, LPAL…NPDV, TGFT…SVNF, NGIT…QIET, DELT…PIQA, NGLS…EIDD, DHLT…KPNS, NGFT…SIDA, SGLT…SPNV, KVET…KVNA, DDQT…NPNL, AGHT…SQAC, KGFT…HPNA, NGLT…SPHS, NGYT…SANA, QGVT…NGNL, SGLT…MVDA, MGYT…DVNA, LGYS…SPNE, and DGTT…ETSF. The residue at position 105 (asparagine 105) is a (3S)-3-hydroxyasparagine; by HIF1AN; partial. Asparagine 233 is modified ((3S)-3-hydroxyasparagine; by HIF1AN; partial). Phosphoserine is present on serine 429. A (3S)-3-hydroxyasparagine; by HIF1AN; partial mark is found at asparagine 431 and asparagine 464. (3S)-3-hydroxyasparagine; by HIF1AN; partial occurs at positions 629 and 662. Residue aspartate 695 is modified to (3S)-3-hydroxyaspartate; by HIF1AN; partial. Position 728 is a (3S)-3-hydroxyasparagine; by HIF1AN; partial (asparagine 728). Residue serine 759 is modified to Phosphoserine. Asparagine 761 is subject to (3S)-3-hydroxyasparagine; by HIF1AN; partial. A phosphoserine mark is found at serine 781, serine 817, serine 834, and serine 856. The tract at residues 875–904 is disordered; sequence EEQEQASKEYDEDSLIPSSPATETSDNISP. The span at 890–904 shows a compositional bias: polar residues; it reads IPSSPATETSDNISP. ZU5 domains follow at residues 913 to 1068 and 1070 to 1216; these read FLVS…IMSR and CQDY…LSDC. Position 961 is a phosphothreonine (threonine 961). A Phosphotyrosine modification is found at tyrosine 1073. Serine 1082 is modified (phosphoserine). The tract at residues 1234–1362 is UPA domain; the sequence is TAVPYMAKFV…QHILCHLNIT (129 aa). Threonine 1378 and threonine 1380 each carry phosphothreonine. The interval 1383-1881 is 55 kDa regulatory domain; the sequence is ALRYSILSES…SKDHTSTPNP (499 aa). Phosphoserine occurs at positions 1390, 1392, and 1396. Threonine 1400 bears the Phosphothreonine mark. The Death domain maps to 1403–1487; sequence AEMKMAVISE…EIVNMLEGSG (85 aa). Serine 1428 and serine 1486 each carry phosphoserine. A disordered region spans residues 1486–1510; it reads SGRQSRNLKPDRRHTDRDYSLSPSQ. A compositionally biased stretch (basic and acidic residues) spans 1493–1504; sequence LKPDRRHTDRDY. Residues serine 1523 and serine 1533 each carry the phosphoserine modification. Residues 1583-1613 are disordered; that stretch reads SSLECSKAEDSDATGHEWKLEGALSEEPRGP. Over residues 1588 to 1612 the composition is skewed to basic and acidic residues; sequence SKAEDSDATGHEWKLEGALSEEPRG. Serine 1617 carries the phosphoserine modification. 3 disordered regions span residues 1637–1703, 1718–1791, and 1840–1859; these read LLEQ…LQDW, QGSW…EAKN, and ADAA…EDPS. Residues 1642-1658 are compositionally biased toward basic and acidic residues; that stretch reads EGQRSEEKLPGSKRQDD. Residues serine 1666, serine 1671, serine 1686, serine 1690, and serine 1696 each carry the phosphoserine modification. Residues 1683–1694 are compositionally biased toward polar residues; that stretch reads ITHSPTVSQVTE. 2 stretches are compositionally biased toward polar residues: residues 1718 to 1739 and 1758 to 1771; these read QGSW…STMT and SEHT…AESS. Residues 1772-1781 are compositionally biased toward basic and acidic residues; it reads QADRDRRQQG.

Component of the ankyrin-1 complex in the erythrocyte, composed of ANK1, RHCE, RHAG, SLC4A1, EPB42, GYPA, GYPB and AQP1. Interacts with a number of integral membrane proteins and cytoskeletal proteins. Interacts (via N-terminus) with SPTB/spectrin (beta chain). Also interacts with TTN/titin. Isoform Mu17 interacts with OBSCN isoform 3/obscurin. Interacts with HIF1AN. Interacts (via ANK 1-5 repeats) with RHCE; this interaction mediates the primary membrane attachment site for ANK1. Interacts (via ANK 1-2 repeats) with AQP1 (via the N-terminal). Interacts (via ANK 1-13 repeats) with EPB42. Interacts directly with SLC4A1 (via the cytoplasmic domain); this interaction is mediated by the SLC4A1 Band 3-II and Band 3-III dimers. In terms of processing, regulated by phosphorylation. Palmitoylated. Post-translationally, hydroxylated by HIF1AN at several asparagine and 1 aspartate residue within ANK repeat region. Hydroxylation seems to increase the conformational stability of this region and may also modulate protein-protein interactions mediated by the ANK repeat region. In terms of processing, (Microbial infection) Probably cleaved by P.falciparum SERA6; the cleavage probably causes the disruption of the actin cytoskeleton and the rupture of the erythrocyte cell membrane releasing the merozoites. In terms of tissue distribution, isoform Mu17, isoform Mu18, isoform Mu19 and isoform Mu20 are expressed in skeletal muscle. Isoform Br21 is expressed in brain.

The protein resides in the cytoplasm. It localises to the cytoskeleton. The protein localises to the membrane. It is found in the myofibril. Its subcellular location is the sarcomere. The protein resides in the m line. It localises to the sarcoplasmic reticulum. Component of the ankyrin-1 complex, a multiprotein complex involved in the stability and shape of the erythrocyte membrane. Attaches integral membrane proteins to cytoskeletal elements; binds to the erythrocyte membrane protein band 4.2, to Na-K ATPase, to the lymphocyte membrane protein GP85, and to the cytoskeletal proteins fodrin, tubulin, vimentin and desmin. Erythrocyte ankyrins also link spectrin (beta chain) to the cytoplasmic domain of the erythrocytes anion exchange protein; they retain most or all of these binding functions. In terms of biological role, together with obscurin in skeletal muscle may provide a molecular link between the sarcoplasmic reticulum and myofibrils. In Homo sapiens (Human), this protein is Ankyrin-1.